The sequence spans 470 residues: MNARIADLLYNYLGRPPSLSEYHMLKLQHRNIQKIIAFNKDIFISLIKKNKKKFFSDIDLTSSEIKTSVLSYFSKQRDTYSIGKLYTIIELQTILVSTYTDVLGVLTLKGPDMFPSSTRYDIKSIKQIATSALHAMNVAVISDKVMGRHNVSPLVSNVNALMEEYLRRHNKNCICYGSYSLYLLNPEVKYGDIDILQTNSRTFLIDLAFLIKFITGSNVVLLKVPYLKNYMVLKDKDDNHIIDSFNIRQETMQVIPKVLIDNIYIVDPALQLMSMFKMFSQIDRLEDLARNPEKLTVRLATLMEYVRVKYGIILNGESNHMPMKGVLDKDKRIIDVDTSGYNFSFKKCYVYLDESSLSSDILDLNADDAVDFENVSNSAYLINGDVLYTYFSNTILLSDPDTIHEISNKAMSAHILIYQILTGNDIRQPLSDLVNSLMYNEKVLIHEVIPRDKKTGKHGIVDIEKDIITH.

Active-site residues include aspartate 192 and aspartate 194.

Belongs to the poxviridae poly(A) polymerase catalytic subunit family. As to quaternary structure, heterodimer of a large (catalytic) subunit and a small (regulatory) subunit.

It catalyses the reaction RNA(n) + ATP = RNA(n)-3'-adenine ribonucleotide + diphosphate. Its function is as follows. Polymerase that creates the 3'-poly(A) tail of mRNA's. This is Poly(A) polymerase catalytic subunit (PAPL) from Oryctolagus cuniculus (Rabbit).